The primary structure comprises 271 residues: 3-methyl-2-oxobutanoate hydroxymethyltransferase (271 aa).

The Mg(2+) site is built by aspartate 51 and aspartate 90. 3-methyl-2-oxobutanoate is bound by residues 51–52 (DS), aspartate 90, and lysine 118. Glutamate 120 provides a ligand contact to Mg(2+). Glutamate 186 (proton acceptor) is an active-site residue.

This sequence belongs to the PanB family. As to quaternary structure, homodecamer; pentamer of dimers. Mg(2+) serves as cofactor.

It is found in the cytoplasm. The catalysed reaction is 3-methyl-2-oxobutanoate + (6R)-5,10-methylene-5,6,7,8-tetrahydrofolate + H2O = 2-dehydropantoate + (6S)-5,6,7,8-tetrahydrofolate. Its pathway is cofactor biosynthesis; (R)-pantothenate biosynthesis; (R)-pantoate from 3-methyl-2-oxobutanoate: step 1/2. Functionally, catalyzes the reversible reaction in which hydroxymethyl group from 5,10-methylenetetrahydrofolate is transferred onto alpha-ketoisovalerate to form ketopantoate. This chain is 3-methyl-2-oxobutanoate hydroxymethyltransferase, found in Xanthomonas euvesicatoria pv. vesicatoria (strain 85-10) (Xanthomonas campestris pv. vesicatoria).